A 132-amino-acid chain; its full sequence is Cliotide T2 (132 aa).

Residues 1-28 (MAYVRLTSLAVLFFLAASVMLNVKKTEG) form the signal peptide. Residues 29–58 (GEFLKCGESCVQGECYTPGCSCDWPICKKN) constitute a cross-link (cyclopeptide (Gly-Asn)). Intrachain disulfides connect Cys34–Cys48, Cys38–Cys50, and Cys43–Cys55. The propeptide at 59–132 (HIIATNAKTV…NLKMPMTIIN (74 aa)) is removed in mature form.

Post-translationally, this is a cyclic peptide. As to expression, expressed in flower, stem, shoot and pod but not in root, leaf, seed and nodule (at protein level).

Probably participates in a plant defense mechanism. Not active against Gram-negative bacteria E.coli ATCC 700926, K.pneumoniae ATTC 13883 and P.aeruginosa ATCC 39018 at concentration up to 100 uM. Has cytotoxic but no hemolytic activity. This Clitoria ternatea (Butterfly pea) protein is Cliotide T2.